Consider the following 303-residue polypeptide: Acetylglutamate kinase (303 aa).

Substrate is bound by residues 68–69 (GG), Arg90, and Asn194.

This sequence belongs to the acetylglutamate kinase family. ArgB subfamily.

Its subcellular location is the cytoplasm. It catalyses the reaction N-acetyl-L-glutamate + ATP = N-acetyl-L-glutamyl 5-phosphate + ADP. The protein operates within amino-acid biosynthesis; L-arginine biosynthesis; N(2)-acetyl-L-ornithine from L-glutamate: step 2/4. In terms of biological role, catalyzes the ATP-dependent phosphorylation of N-acetyl-L-glutamate. The chain is Acetylglutamate kinase from Psychrobacter arcticus (strain DSM 17307 / VKM B-2377 / 273-4).